The primary structure comprises 983 residues: Eukaryotic translation initiation factor 4E transporter (983 aa).

The tract at residues 1–22 (MEKSVAETENGDAFLELKKLPT) is disordered. Serine 4 carries the phosphoserine modification. The YXXXXLphi motif signature appears at 29–35 (YTKEELL). The disordered stretch occupies residues 40–99 (RPYSKQRPSCLSEKYDSDGVWDPEKWHASLYPASGRSSPVESLKKESESDRPSLVRRIAD). The span at 52–66 (EKYDSDGVWDPEKWH) shows a compositional bias: basic and acidic residues. Residues serine 73 and serine 77 each carry the phosphoserine modification. The segment covering 81-99 (SLKKESESDRPSLVRRIAD) has biased composition (basic and acidic residues). Serine 114, serine 119, serine 135, and serine 137 each carry phosphoserine. The segment at 130–160 (VSSRRSGSPLEKDSDGLRLLGGRRIGSGRII) is interaction with CSDE1. A Nuclear localization signal motif is present at residues 194–210 (RREFGDSKRVFGERRRN). The interval 206–229 (ERRRNDSYTEEEPEWFSAGPTSQS) is disordered. The segment at 218-239 (PEWFSAGPTSQSETIELTGFDD) is interaction with DDX6. Phosphoserine is present on residues serine 300, serine 344, serine 352, and serine 373. The disordered stretch occupies residues 341–360 (SNPSRSGSRSSSLGSTPHEE). The span at 344-355 (SRSGSRSSSLGS) shows a compositional bias: low complexity. A Glycyl lysine isopeptide (Lys-Gly) (interchain with G-Cter in SUMO2) cross-link involves residue lysine 409. Serine 416 bears the Phosphoserine mark. The short motif at 437–446 (VEAGLKGLKV) is the Nuclear export signal element. Residues 447 to 489 (DQQMKNSTPFMAEHLEETLSAASSNRQLKKDGDMTAFNKLVNT) are interaction with LSM14A. Lysine 485 is subject to N6-acetyllysine. Residues serine 563 and serine 586 each carry the phosphoserine modification. Disordered regions lie at residues 585–616 (PSPI…SAQM), 642–693 (FYQP…MLSP), 708–800 (REKT…VPGT), and 906–951 (LHPP…SSPV). The short motif at 612–637 (VSAQMSQLELQQAALEGLALPHDLAV) is the Nuclear export signal element. Residues 651–660 (QVDRTRDGLR) are compositionally biased toward basic and acidic residues. At serine 692 the chain carries Phosphoserine. Residues 694–712 (SFTPTSVIRKMYESREKTK) form an interaction with PATL1 region. Over residues 724–734 (DGKEDTQKTSE) the composition is skewed to basic and acidic residues. Polar residues-rich tracts occupy residues 735–774 (ENLL…QTSR) and 910–928 (GSSS…NVPS). Phosphoserine occurs at positions 751, 919, and 949. The interval 938–983 (QLEHRTSQRSSSPVGLAKWFGSDVLQQPLPSMPTKVISVDELEYRQ) is interaction with LSM14A.

This sequence belongs to the 4E-T/EIF4E-T family. In terms of assembly, interacts (via YXXXXLphi motif) with EIF4E. Interacts (via YXXXXLphi motif) with EIF4E2. Interacts with DDX6. Interacts with CSDE1/UNR. Interacts with CNOT1; promoting association with the CCR4-NOT complex. Interacts with LSM14A; promoting EIF4ENIF1 localization to P-bodies. Interacts with PATL1. Interacts with importin beta only in the presence of importin alpha, suggesting a direct interaction with importin alpha. Interacts with APOBEC3G in an RNA-dependent manner. In terms of processing, phosphorylation by MAPK8/JNK1 and or MAPK9/JNK2 in response to oxidative stress promotes P-body assembly. Phosphorylated during meiotic maturation. In terms of tissue distribution, highly expressed in developing oocytes.

Its subcellular location is the cytoplasm. The protein resides in the nucleus. The protein localises to the PML body. It localises to the nucleus speckle. Functionally, EIF4E-binding protein that regulates translation and stability of mRNAs in processing bodies (P-bodies). Plays a key role in P-bodies to coordinate the storage of translationally inactive mRNAs in the cytoplasm and prevent their degradation. Acts as a binding platform for multiple RNA-binding proteins: promotes deadenylation of mRNAs via its interaction with the CCR4-NOT complex, and blocks decapping via interaction with eIF4E (EIF4E and EIF4E2), thereby protecting deadenylated and repressed mRNAs from degradation. Component of a multiprotein complex that sequesters and represses translation of proneurogenic factors during neurogenesis. Promotes miRNA-mediated translational repression. Involved in mRNA translational repression mediated by the miRNA effector TNRC6B by protecting TNRC6B-targeted mRNAs from decapping and subsequent decay. Required for the formation of P-bodies. Also acts as a nucleoplasmic shuttling protein, which mediates the nuclear import of EIF4E and DDX6 by a piggy-back mechanism. The protein is Eukaryotic translation initiation factor 4E transporter of Mus musculus (Mouse).